The following is a 373-amino-acid chain: Core trichothecene cluster (CTC) protein 14 (373 aa).

It belongs to the TRI14 family.

Part of the core gene cluster that mediates the biosynthesis of trichothecenes, a very large family of chemically related bicyclic sesquiterpene compounds acting as mycotoxins, including T2-toxin. The biosynthesis of trichothecenes begins with the cyclization of farnesyl diphosphate to trichodiene and is catalyzed by the trichodiene synthase TRI5. Trichodiene undergoes a series of oxygenations catalyzed by the cytochrome P450 monooxygenase TRI4. TRI4 controls the addition of four oxygens at C-2, C-3, C-11, and the C-12, C-13-epoxide to form the intermediate isotrichotriol. Isotrichotriol then undergoes a non-enzymatic isomerization and cyclization to form isotrichodermol. During this process, the oxygen at the C-2 position becomes the pyran ring oxygen and the hydroxyl group at C-11 is lost. More complex type A trichothecenes are built by modifying isotrichodermol through a series of paired hydroxylation and acetylation or acylation steps. Isotrichodermol is converted to isotrichodermin by the acetyltransferase TRI101. TRI101 encodes a C-3 transacetylase that acts as a self-protection or resistance factor during biosynthesis and that the presence of a free C-3 hydroxyl group is a key component of Fusarium trichothecene phytotoxicity. A second hydroxyl group is added to C-15 by the trichothecene C-15 hydroxylase TRI11, producing 15-decalonectrin, which is then acetylated by TRI3, producing calonectrin. A third hydroxyl group is added at C-4 by the cytochrome P450 monooxygenase TRI13, converting calonectrin to 3,15-diacetoxyspirpenol, which is subsequently acetylated bythe acetyltransferase TRI7. A fourth hydroxyl group is added to C-8 by the cytochrome P450 monooxygenase TRI1, followed by the addition of an isovaleryl moiety by TRI16. Finally, the acetyl group is removed from the C-3 position by the trichothecene C-3 esterase TRI8 to produce T-2 toxin. This is Core trichothecene cluster (CTC) protein 14 from Fusarium sporotrichioides.